We begin with the raw amino-acid sequence, 218 residues long: NAD(P)H-hydrate epimerase (218 aa).

Residues 9-215 enclose the YjeF N-terminal domain; it reads MKKIDQYAID…DIGIPQKAIR (207 aa). Residue 55–59 participates in (6S)-NADPHX binding; that stretch reads NNGAD. K(+) contacts are provided by Asn-56 and Asp-127. Residues 131–137 and Asp-160 contribute to the (6S)-NADPHX site; that span reads GTGLNRT. Ser-163 contributes to the K(+) binding site.

The protein belongs to the NnrE/AIBP family. The cofactor is K(+).

The enzyme catalyses (6R)-NADHX = (6S)-NADHX. It catalyses the reaction (6R)-NADPHX = (6S)-NADPHX. Functionally, catalyzes the epimerization of the S- and R-forms of NAD(P)HX, a damaged form of NAD(P)H that is a result of enzymatic or heat-dependent hydration. This is a prerequisite for the S-specific NAD(P)H-hydrate dehydratase to allow the repair of both epimers of NAD(P)HX. The polypeptide is NAD(P)H-hydrate epimerase (Anaerococcus prevotii (strain ATCC 9321 / DSM 20548 / JCM 6508 / NCTC 11806 / PC1) (Peptostreptococcus prevotii)).